Here is a 77-residue protein sequence, read N- to C-terminus: Ras-related C3 botulinum toxin substrate 1 (77 aa).

A GTP-binding site is contributed by 22-24 (KLD). A Glycyl lysine isopeptide (Lys-Gly) (interchain with G-Cter in ubiquitin) cross-link involves residue Lys-53. 65–66 (AL) contacts GTP.

This sequence belongs to the small GTPase superfamily. Rho family. As to quaternary structure, interacts with NISCH. Interacts with PIP5K1A. Interacts with the GTP-bound form of RAB7A. Interacts with SRGAP2. Interacts with CYFIP1/SRA-1. Interacts with PLXNB3. Interacts with ARHGDIA; the interaction is induced by SEMA5A, mediated through PLXNB3 and inactivates and stabilizes RAC1. Interacts (GTP-bound form preferentially) with PKN2 (via the REM repeats); the interaction stimulates autophosphorylation and phosphorylation of PKN2. Interacts with the GEF proteins PREX1, RASGRF2, FARP1, FARP2, DOCK1, DOCK2 and DOCK7, which promote the exchange between GDP and GTP, and therefore activate it. Interacts with PARD6A, PARD6B and PARD6G in a GTP-dependent manner. Part of a quaternary complex containing PARD3, some PARD6 protein (PARD6A, PARD6B or PARD6G) and some atypical PKC protein (PRKCI or PRKCZ), which plays a central role in epithelial cell polarization. Found in a trimeric complex composed of DOCK1 and ELMO1, which plays a central role in phagocytosis of apoptotic cells. Interacts with RALBP1 via its effector domain. Interacts with PLXNB1. Part of a complex with MAP2K3, MAP3K3, CCM2 and DEF6. Interacts with BAIAP2, BAIAP2L1 and DEF6. Interacts with Y.pseudotuberculosis YPKA and PLCB2. Interacts with NOXA1. Interacts with ARHGEF2. Interacts with TBC1D2. Interacts with UNKL. Interacts with USP6. Interacts with SPATA13. Interacts with ARHGEF16; mediates activation of RAC1 by EPHA2. Interacts with ITGB4. Interacts with S100A8 and calprotectin (S100A8/9). Interacts with PACSIN2. Interacts (when active) with PPP5C (via TPR repeats); activates PPP5C phosphatase activity and translocates PPP5C to the cell membrane. Interacts with RAPH1 (via Ras associating and PH domains). Interacts with MTSS2 (via IMD domain); this interaction may be important to potentiate PDGF-induced RAC1 activation. Interacts with PAK2. Interacts (GTP-bound form) with SH3RF1 and SH3RF3. Found in a complex with SH3RF1, MAPK8IP1/JIP1, MAP3K11/MLK3, MAP2K7/MKK7 and MAPK8/JNK1. Interacts (both active GTP- or inactive GDP-bound forms) with SH3RF2. Interacts (GTP-bound form preferentially) with CYRIB. Interacts with DOCK4 (via DOCKER domain); functions as a guanine nucleotide exchange factor (GEF) for RAC1. Interacts with GARRE1. Interacts with RAP1GDS1. May interact with ARHGAP36. Interacts with DSG3; the interaction is required for DSG3 translocation to cell-cell junctions, organization of cortical F-actin bundles and actin anchoring at cell-cell junctions. Component of the phagocyte NADPH oxidase complex composed of an obligatory core heterodimer formed by the membrane proteins CYBA and CYBB and the cytosolic regulatory subunits NCF1/p47-phox, NCF2/p67-phox, NCF4/p40-phox and the small GTPase RAC1 or RAC2. Interacts with NCF2. Post-translationally, the N-terminus is blocked. GTP-bound active form is ubiquitinated by HACE1, leading to its degradation by the proteasome.

Its subcellular location is the cytoplasm. The protein resides in the membrane. It localises to the melanosome. The protein localises to the cell projection. It is found in the lamellipodium. Its subcellular location is the dendrite. The protein resides in the synapse. It localises to the nucleus. It carries out the reaction GTP + H2O = GDP + phosphate + H(+). Its activity is regulated as follows. Regulated by guanine nucleotide exchange factors (GEFs) which promote the exchange of bound GDP for free GTP, GTPase activating proteins (GAPs) which increase the GTP hydrolysis activity, and GDP dissociation inhibitors which inhibit the dissociation of the nucleotide from the GTPase. GTP hydrolysis is stimulated by ARHGAP30. Its function is as follows. Plasma membrane-associated small GTPase which cycles between active GTP-bound and inactive GDP-bound states. In its active state, binds to a variety of effector proteins to regulate cellular responses such as secretory processes, phagocytosis of apoptotic cells, epithelial cell polarization, neurons adhesion, migration and differentiation, and growth-factor induced formation of membrane ruffles. Rac1 p21/rho GDI heterodimer is the active component of the cytosolic factor sigma 1, which is involved in stimulation of the NADPH oxidase activity in macrophages. Essential for the SPATA13-mediated regulation of cell migration and adhesion assembly and disassembly. Stimulates PKN2 kinase activity. In concert with RAB7A, plays a role in regulating the formation of RBs (ruffled borders) in osteoclasts. In podocytes, promotes nuclear shuttling of NR3C2; this modulation is required for a proper kidney functioning. Required for atypical chemokine receptor ACKR2-induced LIMK1-PAK1-dependent phosphorylation of cofilin (CFL1) and for up-regulation of ACKR2 from endosomal compartment to cell membrane, increasing its efficiency in chemokine uptake and degradation. In neurons, is involved in dendritic spine formation and synaptic plasticity. In hippocampal neurons, involved in spine morphogenesis and synapse formation, through local activation at synapses by guanine nucleotide exchange factors (GEFs), such as ARHGEF6/ARHGEF7/PIX. In synapses, seems to mediate the regulation of F-actin cluster formation performed by SHANK3. In neurons, plays a crucial role in regulating GABA(A) receptor synaptic stability and hence GABAergic inhibitory synaptic transmission through its role in PAK1 activation and eventually F-actin stabilization. Required for DSG3 translocation to cell-cell junctions, DSG3-mediated organization of cortical F-actin bundles and anchoring of actin at cell junctions; via interaction with DSG3. Subunit of the phagocyte NADPH oxidase complex that mediates the transfer of electrons from cytosolic NADPH to O2 to produce the superoxide anion (O2(-)). The polypeptide is Ras-related C3 botulinum toxin substrate 1 (Cavia porcellus (Guinea pig)).